A 985-amino-acid polypeptide reads, in one-letter code: Eukaryotic translation initiation factor 4E transporter (985 aa).

A disordered region spans residues Met1–Ser24. Ser5 carries the phosphoserine modification. The YXXXXLphi motif signature appears at Tyr30–Leu36. Ser74, Ser78, Ser115, Ser120, Ser136, and Ser138 each carry phosphoserine. An interaction with CSDE1 region spans residues Val131 to Ile161. Positions Arg195–Asn211 match the Nuclear localization signal motif. Residues Arg208–Ser230 form a disordered region. The interaction with DDX6 stretch occupies residues Pro219–Asp240. A phosphoserine mark is found at Ser301, Ser345, Ser353, and Ser374. A Glycyl lysine isopeptide (Lys-Gly) (interchain with G-Cter in SUMO2) cross-link involves residue Lys410. A Phosphoserine modification is found at Ser417. Positions Val438–Val447 match the Nuclear export signal motif. Positions Asp448–Thr490 are interaction with LSM14A. Lys486 carries the post-translational modification N6-acetyllysine. Phosphoserine is present on residues Ser513, Ser564, and Ser587. Residues Ile613–Val638 carry the Nuclear export signal motif. Disordered regions lie at residues Gln664–Ser693 and Glu707–Pro803. Ser693 carries the phosphoserine modification. Residues Ser695 to Lys713 are interaction with PATL1. Basic and acidic residues-rich tracts occupy residues Glu707–Ala717 and Asp725–Glu735. Residues Glu736–Ser746 show a composition bias toward low complexity. Phosphoserine is present on Ser752. Residues Thr754 to Arg776 show a composition bias toward polar residues. Phosphoserine occurs at positions 920 and 951. A disordered region spans residues Gln922–Val953. The interval Gln940 to Gln985 is interaction with LSM14A.

Belongs to the 4E-T/EIF4E-T family. As to quaternary structure, interacts (via YXXXXLphi motif) with EIF4E. Interacts (via YXXXXLphi motif) with EIF4E2. Interacts with DDX6. Interacts with CSDE1/UNR. Interacts with CNOT1; promoting association with the CCR4-NOT complex. Interacts with LSM14A; promoting EIF4ENIF1 localization to P-bodies. Interacts with PATL1. Interacts with importin beta only in the presence of importin alpha, suggesting a direct interaction with importin alpha. Interacts with APOBEC3G in an RNA-dependent manner. In terms of processing, phosphorylation by MAPK8/JNK1 and or MAPK9/JNK2 in response to oxidative stress promotes P-body assembly. Phosphorylated during meiotic maturation. Widely expressed.

The protein localises to the cytoplasm. It localises to the P-body. The protein resides in the nucleus. It is found in the PML body. Its subcellular location is the nucleus speckle. Its function is as follows. EIF4E-binding protein that regulates translation and stability of mRNAs in processing bodies (P-bodies). Plays a key role in P-bodies to coordinate the storage of translationally inactive mRNAs in the cytoplasm and prevent their degradation. Acts as a binding platform for multiple RNA-binding proteins: promotes deadenylation of mRNAs via its interaction with the CCR4-NOT complex, and blocks decapping via interaction with eIF4E (EIF4E and EIF4E2), thereby protecting deadenylated and repressed mRNAs from degradation. Component of a multiprotein complex that sequesters and represses translation of proneurogenic factors during neurogenesis. Promotes miRNA-mediated translational repression. Required for the formation of P-bodies. Involved in mRNA translational repression mediated by the miRNA effector TNRC6B by protecting TNRC6B-targeted mRNAs from decapping and subsequent decay. Also acts as a nucleoplasmic shuttling protein, which mediates the nuclear import of EIF4E and DDX6 by a piggy-back mechanism. This Homo sapiens (Human) protein is Eukaryotic translation initiation factor 4E transporter.